The following is a 246-amino-acid chain: Pyridoxine 5'-phosphate synthase (246 aa).

3-amino-2-oxopropyl phosphate is bound at residue Asn10. 12-13 provides a ligand contact to 1-deoxy-D-xylulose 5-phosphate; sequence DH. Residue Arg21 participates in 3-amino-2-oxopropyl phosphate binding. Residue His46 is the Proton acceptor of the active site. Positions 48 and 53 each coordinate 1-deoxy-D-xylulose 5-phosphate. Glu73 serves as the catalytic Proton acceptor. Thr103 contributes to the 1-deoxy-D-xylulose 5-phosphate binding site. The active-site Proton donor is the His193. Residues Gly194 and 215-216 each bind 3-amino-2-oxopropyl phosphate; that span reads GH.

This sequence belongs to the PNP synthase family. Homooctamer; tetramer of dimers.

The protein resides in the cytoplasm. It carries out the reaction 3-amino-2-oxopropyl phosphate + 1-deoxy-D-xylulose 5-phosphate = pyridoxine 5'-phosphate + phosphate + 2 H2O + H(+). It functions in the pathway cofactor biosynthesis; pyridoxine 5'-phosphate biosynthesis; pyridoxine 5'-phosphate from D-erythrose 4-phosphate: step 5/5. Its function is as follows. Catalyzes the complicated ring closure reaction between the two acyclic compounds 1-deoxy-D-xylulose-5-phosphate (DXP) and 3-amino-2-oxopropyl phosphate (1-amino-acetone-3-phosphate or AAP) to form pyridoxine 5'-phosphate (PNP) and inorganic phosphate. The protein is Pyridoxine 5'-phosphate synthase of Rhodopirellula baltica (strain DSM 10527 / NCIMB 13988 / SH1).